Consider the following 130-residue polypeptide: Small ribosomal subunit protein uS9 (130 aa).

Residues 102-130 are disordered; sequence GFLTRDPRMKERKKYGLKKARRAPQFSKR. Positions 111 to 130 are enriched in basic residues; it reads KERKKYGLKKARRAPQFSKR.

This sequence belongs to the universal ribosomal protein uS9 family.

This is Small ribosomal subunit protein uS9 from Clostridium novyi (strain NT).